The sequence spans 447 residues: Tubulin beta-1 chain (447 aa).

GTP contacts are provided by Gln-11, Glu-69, Ser-138, Gly-142, Thr-143, Gly-144, Asn-204, and Asn-226. Glu-69 lines the Mg(2+) pocket. Residues 427–447 (EATADEDAEFEEEQEAEVEEN) form a disordered region. Residues 429–447 (TADEDAEFEEEQEAEVEEN) show a composition bias toward acidic residues.

The protein belongs to the tubulin family. As to quaternary structure, dimer of alpha and beta chains. A typical microtubule is a hollow water-filled tube with an outer diameter of 25 nm and an inner diameter of 15 nM. Alpha-beta heterodimers associate head-to-tail to form protofilaments running lengthwise along the microtubule wall with the beta-tubulin subunit facing the microtubule plus end conferring a structural polarity. Microtubules usually have 13 protofilaments but different protofilament numbers can be found in some organisms and specialized cells. Requires Mg(2+) as cofactor.

It is found in the cytoplasm. The protein resides in the cytoskeleton. Functionally, tubulin is the major constituent of microtubules, a cylinder consisting of laterally associated linear protofilaments composed of alpha- and beta-tubulin heterodimers. Microtubules grow by the addition of GTP-tubulin dimers to the microtubule end, where a stabilizing cap forms. Below the cap, tubulin dimers are in GDP-bound state, owing to GTPase activity of alpha-tubulin. This is Tubulin beta-1 chain from Glossina morsitans morsitans (Savannah tsetse fly).